The chain runs to 199 residues: Putative rhomboid protease YdcA (199 aa).

Helical transmembrane passes span 14 to 34, 65 to 85, 97 to 117, 122 to 142, 147 to 167, and 172 to 192; these read LYPVVTFILALQAVLWLFFSL, ILLHAGFTHLLFNSMSIFLFA, FLLVYAGSGIIGNIGTYVTEP, HVGASGAIFGLFGVYLFMVLF, IGQEHSKMIITLLAFAVLMSF, and INMMAHLFGLCGGFLLSFLCV. Ser-126 (nucleophile) is an active-site residue. His-177 acts as the Charge relay system in catalysis.

The protein belongs to the peptidase S54 family.

The protein localises to the cell membrane. The protein is Putative rhomboid protease YdcA (ydcA) of Bacillus subtilis (strain 168).